Consider the following 336-residue polypeptide: Eukaryotic translation initiation factor 3 subunit I (336 aa).

5 WD repeats span residues Gly8–Thr47, Gly50–Glu91, Cys146–Asn185, Glu190–Thr229, and Gly287–Met326.

This sequence belongs to the eIF-3 subunit I family. In terms of assembly, component of the eukaryotic translation initiation factor 3 (eIF-3) complex.

It localises to the cytoplasm. Its function is as follows. Component of the eukaryotic translation initiation factor 3 (eIF-3) complex, which is involved in protein synthesis of a specialized repertoire of mRNAs and, together with other initiation factors, stimulates binding of mRNA and methionyl-tRNAi to the 40S ribosome. The eIF-3 complex specifically targets and initiates translation of a subset of mRNAs involved in cell proliferation. In Aspergillus terreus (strain NIH 2624 / FGSC A1156), this protein is Eukaryotic translation initiation factor 3 subunit I (tif34).